A 611-amino-acid polypeptide reads, in one-letter code: Pseudomonine synthase PmsE (611 aa).

The 76-residue stretch at 533 to 608 (VSVENTRTWL…SWWALVEARQ (76 aa)) folds into the Carrier domain. An O-(pantetheine 4'-phosphoryl)serine modification is found at serine 569.

The protein belongs to the ATP-dependent AMP-binding enzyme family. Pantetheine 4'-phosphate is required as a cofactor.

The enzyme catalyses salicylate + holo-[ACP] + ATP = salicyl-[ACP] + AMP + diphosphate. It functions in the pathway siderophore biosynthesis; pseudomonine biosynthesis. Functionally, involved in the biosynthesis of the siderophore pseudomonine. Specifically adenylates salicylate and loads it onto its peptidyl carrier domain, via a thioester linkage to the phosphopanthetheine moiety. The protein is Pseudomonine synthase PmsE of Pseudomonas entomophila (strain L48).